Consider the following 177-residue polypeptide: Transmembrane protein 196 (177 aa).

The next 4 membrane-spanning stretches (helical) occupy residues 11 to 31, 47 to 67, 73 to 93, and 106 to 126; these read LLVL…VGAV, SSPV…IFCA, LIMI…ILNI, and LYSL…GCTI. Basic and acidic residues predominate over residues 152–162; it reads HSHEMTEKDTE. Residues 152-177 are disordered; sequence HSHEMTEKDTENITNGGGPLALNGRV.

Its subcellular location is the cytoplasm. The protein localises to the membrane. This is Transmembrane protein 196 (tmem196) from Xenopus tropicalis (Western clawed frog).